The following is a 496-amino-acid chain: NADP-dependent glyceraldehyde-3-phosphate dehydrogenase (496 aa).

Position 2 is an N-acetylalanine (Ala-2). Thr-4 is subject to Phosphothreonine. Substrate contacts are provided by residues Arg-116 and 169–170; that span reads NY. The NADP(+) site is built by Lys-192, Thr-195, and Asp-230. NAD(+) is bound at residue 245–249; the sequence is GGDTG. Glu-264 (proton acceptor) is an active-site residue. Residue 297-299 participates in substrate binding; that stretch reads RCT. Cys-298 functions as the Nucleophile in the catalytic mechanism. Residue Glu-391 participates in NADP(+) binding. Arg-451 contacts substrate.

It belongs to the aldehyde dehydrogenase family.

The protein localises to the cytoplasm. The catalysed reaction is D-glyceraldehyde 3-phosphate + NADP(+) + H2O = (2R)-3-phosphoglycerate + NADPH + 2 H(+). Functionally, important as a means of generating NADPH for biosynthetic reactions. This Arabidopsis thaliana (Mouse-ear cress) protein is NADP-dependent glyceraldehyde-3-phosphate dehydrogenase (ALDH11A3).